The primary structure comprises 270 residues: 3-phenylpropionate-dihydrodiol/cinnamic acid-dihydrodiol dehydrogenase (270 aa).

10-34 (FITGGGSGLGLALVERFIEEGAQVA) is a binding site for NAD(+). Substrate is bound at residue Ser-143. The active-site Proton acceptor is Tyr-156.

This sequence belongs to the short-chain dehydrogenases/reductases (SDR) family.

It catalyses the reaction 3-(cis-5,6-dihydroxycyclohexa-1,3-dien-1-yl)propanoate + NAD(+) = 3-(2,3-dihydroxyphenyl)propanoate + NADH + H(+). It carries out the reaction (2E)-3-(cis-5,6-dihydroxycyclohexa-1,3-dien-1-yl)prop-2-enoate + NAD(+) = (2E)-3-(2,3-dihydroxyphenyl)prop-2-enoate + NADH + H(+). The protein operates within aromatic compound metabolism; 3-phenylpropanoate degradation. Functionally, converts 3-phenylpropionate-dihydrodiol (PP-dihydrodiol) and cinnamic acid-dihydrodiol (CI-dihydrodiol) into 3-(2,3-dihydroxylphenyl)propanoic acid (DHPP) and 2,3-dihydroxicinnamic acid (DHCI), respectively. The sequence is that of 3-phenylpropionate-dihydrodiol/cinnamic acid-dihydrodiol dehydrogenase from Escherichia coli O17:K52:H18 (strain UMN026 / ExPEC).